We begin with the raw amino-acid sequence, 204 residues long: Somatotropin (204 aa).

Residues 1–17 form the signal peptide; it reads MDRVLLLLSVLSLGVSS. Gln18 bears the Pyrrolidone carboxylic acid mark. Position 36 (His36) interacts with Zn(2+). A disulfide bond links Cys69 and Cys177. Position 186 (Glu186) interacts with Zn(2+). Cys194 and Cys202 form a disulfide bridge.

This sequence belongs to the somatotropin/prolactin family.

Its subcellular location is the secreted. Growth hormone plays an important role in growth control and is involved in the regulation of several anabolic processes. Implicated as an osmoregulatory substance important for seawater adaptation. The protein is Somatotropin (gh) of Sciaenops ocellatus (Red drum).